A 225-amino-acid polypeptide reads, in one-letter code: Cytochrome c oxidase subunit 2 (225 aa).

At 1 to 25 (MSTWMMFMFQESNSLYADNLVSFHN) the chain is on the mitochondrial intermembrane side. Residues 26-47 (MVMIIVIMISTLTVYIIFDLFL) traverse the membrane as a helical segment. The Mitochondrial matrix portion of the chain corresponds to 48–62 (NKFSNLYLLKNHNIE). Residues 63-82 (IIWMIVPIVILLIICFPSLK) traverse the membrane as a helical segment. The Mitochondrial intermembrane portion of the chain corresponds to 83-225 (ILYLIDEIVN…YFMNWIYKMN (143 aa)). Cu cation is bound by residues His159, Cys194, Glu196, Cys198, His202, and Met205. Position 196 (Glu196) interacts with Mg(2+).

It belongs to the cytochrome c oxidase subunit 2 family. Component of the cytochrome c oxidase (complex IV, CIV), a multisubunit enzyme composed of a catalytic core of 3 subunits and several supernumerary subunits. The complex exists as a monomer or a dimer and forms supercomplexes (SCs) in the inner mitochondrial membrane with ubiquinol-cytochrome c oxidoreductase (cytochrome b-c1 complex, complex III, CIII). It depends on Cu cation as a cofactor.

It localises to the mitochondrion inner membrane. The enzyme catalyses 4 Fe(II)-[cytochrome c] + O2 + 8 H(+)(in) = 4 Fe(III)-[cytochrome c] + 2 H2O + 4 H(+)(out). Component of the cytochrome c oxidase, the last enzyme in the mitochondrial electron transport chain which drives oxidative phosphorylation. The respiratory chain contains 3 multisubunit complexes succinate dehydrogenase (complex II, CII), ubiquinol-cytochrome c oxidoreductase (cytochrome b-c1 complex, complex III, CIII) and cytochrome c oxidase (complex IV, CIV), that cooperate to transfer electrons derived from NADH and succinate to molecular oxygen, creating an electrochemical gradient over the inner membrane that drives transmembrane transport and the ATP synthase. Cytochrome c oxidase is the component of the respiratory chain that catalyzes the reduction of oxygen to water. Electrons originating from reduced cytochrome c in the intermembrane space (IMS) are transferred via the dinuclear copper A center (CU(A)) of subunit 2 and heme A of subunit 1 to the active site in subunit 1, a binuclear center (BNC) formed by heme A3 and copper B (CU(B)). The BNC reduces molecular oxygen to 2 water molecules using 4 electrons from cytochrome c in the IMS and 4 protons from the mitochondrial matrix. This chain is Cytochrome c oxidase subunit 2 (COII), found in Apis florea (Dwarf honeybee).